A 176-amino-acid chain; its full sequence is Inorganic pyrophosphatase (176 aa).

Substrate contacts are provided by K30, R44, and Y56. Mg(2+) contacts are provided by D66, D71, and D103. Position 142 (Y142) interacts with substrate.

It belongs to the PPase family. In terms of assembly, homohexamer. Mg(2+) serves as cofactor.

The protein resides in the cytoplasm. It carries out the reaction diphosphate + H2O = 2 phosphate + H(+). Its function is as follows. Catalyzes the hydrolysis of inorganic pyrophosphate (PPi) forming two phosphate ions. The chain is Inorganic pyrophosphatase from Brucella melitensis biotype 1 (strain ATCC 23456 / CCUG 17765 / NCTC 10094 / 16M).